The chain runs to 231 residues: MKIKAISIDIDGTITYPNRMIHEKALEAIRRAESLGIPIMLVTGNTVQFAEAASILIGTSGPVVAEDGGAISYKKKRIFLASMDEEWILWNEIRKRFPNARTSYTMPDRRAGLVIMRETINVETVREIINELNLNLVAVDSGFAIHVKKPWINKGSGIEKASEFLGIKPKEVAHVGDGENDLDAFKVVGYKVAVAQAPKILKENADYVTKKEYGEGGAEAIYHILEKFGYL.

Aspartate 9 (nucleophile) is an active-site residue. Residues aspartate 9 and aspartate 11 each contribute to the Mg(2+) site. Aspartate 11 (proton donor) is an active-site residue. Position 154 (lysine 154) interacts with substrate. Residues aspartate 177 and aspartate 181 each coordinate Mg(2+).

The protein belongs to the archaeal SPP-like hydrolase family. In terms of assembly, homodimer. Requires Mg(2+) as cofactor.

The enzyme catalyses 2-phosphoglycolate + H2O = glycolate + phosphate. In terms of biological role, catalyzes the dephosphorylation of 2-phosphoglycolate. Has phosphatase activity towards p-nitrophenylphosphate (in vitro). This chain is Phosphoglycolate phosphatase, found in Pyrococcus horikoshii (strain ATCC 700860 / DSM 12428 / JCM 9974 / NBRC 100139 / OT-3).